The following is an 81-amino-acid chain: Sulfur carrier protein TusA (81 aa).

The Cysteine persulfide intermediate role is filled by cysteine 19.

This sequence belongs to the sulfur carrier protein TusA family. As to quaternary structure, interacts with IscS.

It is found in the cytoplasm. It participates in tRNA modification. Functionally, sulfur carrier protein involved in sulfur trafficking in the cell. Part of a sulfur-relay system required for 2-thiolation during synthesis of 2-thiouridine of the modified wobble base 5-methylaminomethyl-2-thiouridine (mnm(5)s(2)U) in tRNA. Interacts with IscS and stimulates its cysteine desulfurase activity. Accepts an activated sulfur from IscS, which is then transferred to TusD, and thus determines the direction of sulfur flow from IscS to 2-thiouridine formation. Also appears to be involved in sulfur transfer for the biosynthesis of molybdopterin. The chain is Sulfur carrier protein TusA from Cronobacter sakazakii (strain ATCC BAA-894) (Enterobacter sakazakii).